Consider the following 393-residue polypeptide: Autophagy-related protein 18c (393 aa).

WD repeat units follow at residues 27-65 (KEEA…ETFR), 70-114 (DGGF…CISE), 199-239 (AHDS…RLQE), and 244-283 (VDRA…VGED).

Belongs to the WD repeat PROPPIN family. As to quaternary structure, component of the PI(3,5)P2 regulatory complex at least composed of ATG18, SAC/FIG4, FAB1 and VAC14. Expressed in roots, stems, flowers and leaves.

It is found in the preautophagosomal structure membrane. The protein localises to the vacuole membrane. The PI(3,5)P2 regulatory complex regulates both the synthesis and turnover of phosphatidylinositol 3,5-bisphosphate (PtdIns(3,5)P2). Required for autophagy. This is Autophagy-related protein 18c (ATG18C) from Arabidopsis thaliana (Mouse-ear cress).